The sequence spans 736 residues: 1,4-alpha-glucan branching enzyme GlgB (736 aa).

The Nucleophile role is filled by Asp417. Catalysis depends on Glu470, which acts as the Proton donor.

This sequence belongs to the glycosyl hydrolase 13 family. GlgB subfamily. In terms of assembly, monomer.

It catalyses the reaction Transfers a segment of a (1-&gt;4)-alpha-D-glucan chain to a primary hydroxy group in a similar glucan chain.. Its pathway is glycan biosynthesis; glycogen biosynthesis. Catalyzes the formation of the alpha-1,6-glucosidic linkages in glycogen by scission of a 1,4-alpha-linked oligosaccharide from growing alpha-1,4-glucan chains and the subsequent attachment of the oligosaccharide to the alpha-1,6 position. This is 1,4-alpha-glucan branching enzyme GlgB from Pseudomonas putida (strain ATCC 47054 / DSM 6125 / CFBP 8728 / NCIMB 11950 / KT2440).